Reading from the N-terminus, the 91-residue chain is YcgL domain-containing protein Sde_1339 (91 aa).

Residues 1–85 (MIVDIYRSAK…PPESYMNEIP (85 aa)) form the YcgL domain. The interval 72–91 (QMPPPPESYMNEIPNDKMPR) is disordered.

This chain is YcgL domain-containing protein Sde_1339, found in Saccharophagus degradans (strain 2-40 / ATCC 43961 / DSM 17024).